The chain runs to 333 residues: Dehydrodolichyl diphosphate synthase complex subunit Dhdds (333 aa).

Positions 34, 35, 37, 38, and 85 each coordinate (2E,6E)-farnesyl diphosphate. Mg(2+) is bound at residue Asp34. Isopentenyl diphosphate-binding residues include Arg38, Arg85, Arg205, Arg211, and Ser213.

It belongs to the UPP synthase family. As to quaternary structure, the active dehydrodolichyl diphosphate synthase complex is a heterotetramer composed of a dimer of heterodimer of DHDDS and NUS1. Interacts with NPC2. The cofactor is Mg(2+).

It is found in the endoplasmic reticulum membrane. It catalyses the reaction n isopentenyl diphosphate + (2E,6E)-farnesyl diphosphate = a di-trans,poly-cis-polyprenyl diphosphate + n diphosphate. It participates in protein modification; protein glycosylation. It functions in the pathway lipid metabolism. Its function is as follows. With NUS1, forms the dehydrodolichyl diphosphate synthase (DDS) complex, an essential component of the dolichol monophosphate (Dol-P) biosynthetic machinery. Both subunits contribute to enzymatic activity, i.e. condensation of multiple copies of isopentenyl pyrophosphate (IPP) to farnesyl pyrophosphate (FPP) to produce dehydrodolichyl diphosphate (Dedol-PP), a precursor of dolichol phosphate which is utilized as a sugar carrier in protein glycosylation in the endoplasmic reticulum (ER). Synthesizes long-chain polyprenols, mostly of C95 and C100 chain length. Regulates the glycosylation and stability of nascent NPC2, thereby promoting trafficking of LDL-derived cholesterol. The protein is Dehydrodolichyl diphosphate synthase complex subunit Dhdds of Mus musculus (Mouse).